The chain runs to 308 residues: Transcriptional adapter 1-1 (308 aa).

This sequence belongs to the TADA1 family. In terms of assembly, component of the Spt-Ada-Gcn5 acetyltransferase (SAGA) complex consisting of wda/Taf5L, Saf6, Taf9, Taf10b, Taf12, Ada1, Spt3, Spt7, Spt20, Sf3b3, Sf3b5, Nipped-A/Tra1, a histone acetyltransferase (HAT) module made up of Gcn5, Ada2b (Isoform B), Ada3 and Sgf29, and a deubiquitinase (DUB) module made up of not/nonstop, Sgf11 and e(y)2 tethered to SAGA by Atxn7. Not a component of the Ada2a-containing ATAC complex.

The protein localises to the nucleus. Component of the transcription regulatory complex SAGA, a multiprotein complex that activates transcription by remodeling chromatin and mediating histone acetylation and deubiquitination. The SAGA complex predominantly acetylates histone H3. The protein is Transcriptional adapter 1-1 of Drosophila melanogaster (Fruit fly).